A 341-amino-acid polypeptide reads, in one-letter code: N-acetyl-gamma-glutamyl-phosphate reductase (341 aa).

Residue C149 is part of the active site.

The protein belongs to the NAGSA dehydrogenase family. Type 1 subfamily.

It localises to the cytoplasm. It carries out the reaction N-acetyl-L-glutamate 5-semialdehyde + phosphate + NADP(+) = N-acetyl-L-glutamyl 5-phosphate + NADPH + H(+). Its pathway is amino-acid biosynthesis; L-arginine biosynthesis; N(2)-acetyl-L-ornithine from L-glutamate: step 3/4. In terms of biological role, catalyzes the NADPH-dependent reduction of N-acetyl-5-glutamyl phosphate to yield N-acetyl-L-glutamate 5-semialdehyde. This Methanocaldococcus jannaschii (strain ATCC 43067 / DSM 2661 / JAL-1 / JCM 10045 / NBRC 100440) (Methanococcus jannaschii) protein is N-acetyl-gamma-glutamyl-phosphate reductase.